Reading from the N-terminus, the 985-residue chain is Ephrin type-B receptor 1-A (985 aa).

Residues 1-19 (MELNVLLLLLCLSGGQVGA) form the signal peptide. At 20 to 542 (VEETLMDTRT…YKSELREQLP (523 aa)) the chain is on the extracellular side. Positions 21 to 203 (EETLMDTRTA…FFKEMPSVVQ (183 aa)) constitute an Eph LBD domain. 2 Fibronectin type-III domains span residues 324-434 (VPSG…TNQA) and 435-532 (APSS…TAED). Residues Asn-336, Asn-428, and Asn-482 are each glycosylated (N-linked (GlcNAc...) asparagine). A helical membrane pass occupies residues 543-563 (LTGSAAAGVVFIVSLVAISIV). Residues 564–985 (CSRKRTYSKE…QITQSPTSIA (422 aa)) are Cytoplasmic-facing. Residues 620–883 (VKIEEVIGAG…EIVNTLRPMI (264 aa)) enclose the Protein kinase domain. ATP-binding positions include 626-634 (IGAGEFGEV) and Lys-652. Catalysis depends on Asp-745, which acts as the Proton acceptor. An SAM domain is found at 912–976 (SAFTSVDDWL…LNSIQSMRVQ (65 aa)). The PDZ-binding motif lies at 983–985 (SIA).

The protein belongs to the protein kinase superfamily. Tyr protein kinase family. Ephrin receptor subfamily. In terms of assembly, heterotetramer upon binding of the ligand. The heterotetramer is composed of an ephrin dimer and a receptor dimer. Oligomerization is probably required to induce biological responses. Post-translationally, phosphorylated. Autophosphorylation is stimulated by ligands.

It is found in the cell membrane. It localises to the early endosome membrane. Its subcellular location is the cell projection. The protein resides in the dendrite. The enzyme catalyses L-tyrosyl-[protein] + ATP = O-phospho-L-tyrosyl-[protein] + ADP + H(+). Its function is as follows. Receptor tyrosine kinase which binds promiscuously transmembrane ephrin-B family ligands residing on adjacent cells, leading to contact-dependent bidirectional signaling into neighboring cells. The signaling pathway downstream of the receptor is referred to as forward signaling while the signaling pathway downstream of the ephrin ligand is referred to as reverse signaling. May play a role in axon guidance during nervous system development. May also play an important redundant role with other ephrin-B receptors in development and maturation of dendritic spines and synapse formation. More generally, may play a role in targeted cell migration and adhesion. Upon activation by ephrin-B ligands activates the MAPK/ERK and the JNK signaling cascades to regulate cell migration and adhesion respectively. The chain is Ephrin type-B receptor 1-A (ephb1-a) from Xenopus laevis (African clawed frog).